Here is a 328-residue protein sequence, read N- to C-terminus: Malate dehydrogenase (328 aa).

Residue G12–A18 coordinates NAD(+). R93 and R99 together coordinate substrate. Residues N106, Q113, and V130–N132 contribute to the NAD(+) site. Substrate is bound by residues N132 and R163. Catalysis depends on H188, which acts as the Proton acceptor.

Belongs to the LDH/MDH superfamily. MDH type 2 family.

The catalysed reaction is (S)-malate + NAD(+) = oxaloacetate + NADH + H(+). Catalyzes the reversible oxidation of malate to oxaloacetate. The protein is Malate dehydrogenase of Burkholderia cenocepacia (strain HI2424).